We begin with the raw amino-acid sequence, 129 residues long: Transcriptional activator protein (129 aa).

Residues K13–R28 carry the Nuclear localization signal motif. A zinc finger lies at C33–H50. Positions I73 to S109 are disordered. Residue S109 is modified to Phosphoserine; by host. A transactivation region spans residues S115–K129.

Belongs to the geminiviridae transcriptional activator protein family. In terms of assembly, monomer. Homodimer. Homooligomer. Self-interaction correlates with nuclear localization and efficient activation of transcription. Monomers suppress local silencing by interacting with and inactivating host adenosine kinase 2 (ADK2) in the cytoplasm. Interacts with and inhibits host SNF1 kinase. Binds to ssDNA. In terms of processing, phosphorylated at Ser-109 by A.thaliana KIN10.

It is found in the host nucleus. The protein resides in the host cytoplasm. Strong activator of the late viral genes promoters. Enhances the expression of the capsid protein and nuclear shuttle protein. Acts as a suppressor of RNA-mediated gene silencing, also known as post-transcriptional gene silencing (PTGS), a mechanism of plant viral defense that limits the accumulation of viral RNAs. Suppresses the host RNA silencing by inhibiting adenosine kinase 2 (ADK2), a kinase involved in a general methylation pathway. Also suppresses the host basal defense by interacting with and inhibiting SNF1 kinase, a key regulator of cell metabolism implicated in innate antiviral defense. Determines pathogenicity. This chain is Transcriptional activator protein, found in Cabbage leaf curl virus (isolate Jamaica) (CaLCuV).